A 186-amino-acid chain; its full sequence is Large ribosomal subunit protein uL5 (186 aa).

It belongs to the universal ribosomal protein uL5 family. Part of the 50S ribosomal subunit; part of the 5S rRNA/L5/L18/L25 subcomplex. Contacts the 5S rRNA and the P site tRNA. Forms a bridge to the 30S subunit in the 70S ribosome.

Its function is as follows. This is one of the proteins that bind and probably mediate the attachment of the 5S RNA into the large ribosomal subunit, where it forms part of the central protuberance. In the 70S ribosome it contacts protein S13 of the 30S subunit (bridge B1b), connecting the 2 subunits; this bridge is implicated in subunit movement. Contacts the P site tRNA; the 5S rRNA and some of its associated proteins might help stabilize positioning of ribosome-bound tRNAs. This is Large ribosomal subunit protein uL5 from Legionella pneumophila subsp. pneumophila (strain Philadelphia 1 / ATCC 33152 / DSM 7513).